Reading from the N-terminus, the 364-residue chain is Putative zinc metalloprotease all3971 (364 aa).

H17 serves as a coordination point for Zn(2+). Residue E18 is part of the active site. H21 serves as a coordination point for Zn(2+). Transmembrane regions (helical) follow at residues 92 to 114 (AIVI…LAQV), 281 to 303 (LFFF…LPAL), and 329 to 346 (VMQT…FLIV). One can recognise a PDZ domain in the interval 103–188 (LIFAYMLLLA…KSIQLTVARG (86 aa)).

Belongs to the peptidase M50B family. The cofactor is Zn(2+).

It localises to the cell inner membrane. The polypeptide is Putative zinc metalloprotease all3971 (Nostoc sp. (strain PCC 7120 / SAG 25.82 / UTEX 2576)).